Reading from the N-terminus, the 89-residue chain is Probable Fe(2+)-trafficking protein (89 aa).

This sequence belongs to the Fe(2+)-trafficking protein family.

Its function is as follows. Could be a mediator in iron transactions between iron acquisition and iron-requiring processes, such as synthesis and/or repair of Fe-S clusters in biosynthetic enzymes. This is Probable Fe(2+)-trafficking protein from Hahella chejuensis (strain KCTC 2396).